Consider the following 143-residue polypeptide: Large ribosomal subunit protein uL13 (143 aa).

The protein belongs to the universal ribosomal protein uL13 family. As to quaternary structure, part of the 50S ribosomal subunit.

Functionally, this protein is one of the early assembly proteins of the 50S ribosomal subunit, although it is not seen to bind rRNA by itself. It is important during the early stages of 50S assembly. This is Large ribosomal subunit protein uL13 from Clostridioides difficile (strain 630) (Peptoclostridium difficile).